We begin with the raw amino-acid sequence, 287 residues long: Putative sugar uptake protein spyM18_2243 (287 aa).

Helical transmembrane passes span 4–26, 33–50, 55–72, 85–107, 117–134, 154–171, 181–200, 207–229, 234–256, and 268–285; these read IFYALIPMFTWGSIGFVSNKIGG, LGMTFGALLFSLAVWLIV, TLQLWLFGILGGFIWSIG, VSVANPLSSGSQLVLGSLIGVLV, FVVGSLALLLLIVGFYFS, FRALTYSTIGYVMYAVLF, SVILPMAVGMVLGAITFMSF, YVIKNSVVGLLWGIGNIFMLLAA, LAIAFSFSQLGAIISIVGGILFL, and VVTGIICFIVGAILLGVV.

It belongs to the GRP transporter (TC 2.A.7.5) family.

The protein localises to the cell membrane. This Streptococcus pyogenes serotype M18 (strain MGAS8232) protein is Putative sugar uptake protein spyM18_2243.